The sequence spans 303 residues: UDP-3-O-acyl-N-acetylglucosamine deacetylase (303 aa).

Positions 78, 237, and 241 each coordinate Zn(2+). His264 acts as the Proton donor in catalysis.

The protein belongs to the LpxC family. It depends on Zn(2+) as a cofactor.

It catalyses the reaction a UDP-3-O-[(3R)-3-hydroxyacyl]-N-acetyl-alpha-D-glucosamine + H2O = a UDP-3-O-[(3R)-3-hydroxyacyl]-alpha-D-glucosamine + acetate. It participates in glycolipid biosynthesis; lipid IV(A) biosynthesis; lipid IV(A) from (3R)-3-hydroxytetradecanoyl-[acyl-carrier-protein] and UDP-N-acetyl-alpha-D-glucosamine: step 2/6. Catalyzes the hydrolysis of UDP-3-O-myristoyl-N-acetylglucosamine to form UDP-3-O-myristoylglucosamine and acetate, the committed step in lipid A biosynthesis. The sequence is that of UDP-3-O-acyl-N-acetylglucosamine deacetylase from Coxiella burnetii (strain CbuG_Q212) (Coxiella burnetii (strain Q212)).